Consider the following 1256-residue polypeptide: Nephrin (1256 aa).

The first 35 residues, 1 to 35 (MGAKEATVRGPGASPVHRTCHLIPLLLAGMLTTGL), serve as a signal peptide directing secretion. The Extracellular segment spans residues 36–1078 (AQSPVPTSAP…PGPPRLPLLP (1043 aa)). Ig-like C2-type domains follow at residues 39-144 (PVPT…VILS), 149-247 (PKVL…ASFT), 256-347 (PPVI…RSIT), 354-448 (PSAV…KSLT), 454-554 (PAQK…TQLV), and 558-649 (PPTN…ETVS). N-linked (GlcNAc...) asparagine glycosylation occurs at Asn54. 3 disulfide bridges follow: Cys67-Cys125, Cys174-Cys231, and Cys279-Cys331. N-linked (GlcNAc...) asparagine glycans are attached at residues Asn370 and Asn415. Cys375 and Cys431 are oxidised to a cystine. Ser446 carries the phosphoserine modification. Cys479 and Cys542 form a disulfide bridge. The tract at residues 491–516 (TWLKDSRPVNDPRQSQEPRRVQLGSV) is disordered. The segment covering 494–510 (KDSRPVNDPRQSQEPRR) has biased composition (basic and acidic residues). N-linked (GlcNAc...) asparagine glycans are attached at residues Asn561, Asn578, Asn591, and Asn722. A disulfide bond links Cys581 and Cys637. Ig-like C2-type domains lie at 754 to 846 (PTIR…LVRL) and 852 to 953 (PQVD…VSIS). Intrachain disulfides connect Cys775–Cys830 and Cys877–Cys934. Residues 957–1051 (PPLGLKVVSV…GIQVSITTPG (95 aa)) enclose the Fibronectin type-III domain. Residues 1048–1071 (TTPGLDQAPEDTDQPLPTEQPPGP) form a disordered region. A helical membrane pass occupies residues 1079–1099 (VLFAVGGLLLLSNASCVGGLL). The Cytoplasmic segment spans residues 1100–1256 (WRRRLRRLAE…LPFELRGHLV (157 aa)). Phosphoserine is present on Ser1112. The segment covering 1112-1128 (SEKTEAGSEEDRIRNEY) has biased composition (basic and acidic residues). A disordered region spans residues 1112–1143 (SEKTEAGSEEDRIRNEYEESQWTGDRDTRSST). Thr1115 is modified (phosphothreonine). Ser1119 carries the phosphoserine modification. At Tyr1208 the chain carries Phosphotyrosine; by FYN.

This sequence belongs to the immunoglobulin superfamily. In terms of assembly, interacts with NPHS2 and with CD2AP (via C-terminal domain). Interacts with MAGI1 (via PDZ 2 and 3 domains) forming a tripartite complex with IGSF5/JAM4. Forms a complex with ACTN4, CASK, IQGAP1, MAGI2, SPTAN1 and SPTBN1. Interacts with DDN; the interaction is direct. Self-associates (via the Ig-like domains). Also interacts (via the Ig-like domains) with KIRREL1 and KIRREL2; the interaction with KIRREL1 is dependent on KIRREL1 glycosylation. Interacts with KIRREL3. Interacts with phosphatidylinositol 3-kinase regulatory subunit PIK3R1; the interaction is reduced by high glucose levels. In terms of processing, phosphorylated at Tyr-1208 by FYN, leading to the recruitment and activation of phospholipase C-gamma-1/PLCG1. Tyrosine phosphorylation is reduced by high glucose levels. Dephosphorylated by tensin TNS2 which leads to reduced binding of NPHN1 to PIK3R1. As to expression, expressed in kidney glomeruli. In the embryo, expressed in the mesonephric kidney at 11 dpc with strong expression in cranial tubules with podocyte-like structures. Expression is observed in the podocytes of the developing kidney from 13 dpc. High expression is also detected in the developing cerebellum, hindbrain, spinal cord, retina and hypothalamus. Expressed in skeletal muscle during myoblast fusion such as in the adult following acute injury and in the embryo but not detected in uninjured adult skeletal muscle. Isoform 1 and isoform 2 are expressed in the newborn brain and developing cerebellum. Isoform 1 is the predominant isoform in adult kidney.

It is found in the cell membrane. Seems to play a role in the development or function of the kidney glomerular filtration barrier. Regulates glomerular vascular permeability. May anchor the podocyte slit diaphragm to the actin cytoskeleton. Plays a role in skeletal muscle formation through regulation of myoblast fusion. The protein is Nephrin (Nphs1) of Mus musculus (Mouse).